An 824-amino-acid polypeptide reads, in one-letter code: Leucine--tRNA ligase (824 aa).

A 'HIGH' region motif is present at residues 42 to 52 (PYPSGHLHMGH). Positions 581–585 (KMSKS) match the 'KMSKS' region motif. Residue K584 participates in ATP binding.

This sequence belongs to the class-I aminoacyl-tRNA synthetase family.

The protein resides in the cytoplasm. It carries out the reaction tRNA(Leu) + L-leucine + ATP = L-leucyl-tRNA(Leu) + AMP + diphosphate. The protein is Leucine--tRNA ligase of Syntrophomonas wolfei subsp. wolfei (strain DSM 2245B / Goettingen).